We begin with the raw amino-acid sequence, 1110 residues long: ATP-dependent DNA helicase MPH1 (1110 aa).

A compositionally biased stretch (polar residues) spans 24 to 34; it reads LNEVSDSQTGR. Disordered regions lie at residues 24-165, 178-212, and 236-305; these read LNEV…TNGK, FEEE…PVTN, and TETA…PTHH. Basic and acidic residues-rich tracts occupy residues 42-57 and 178-188; these read NSHE…REIE and FEEEQSARGDA. Acidic residues predominate over residues 189–199; it reads EMLDDSIEEPG. Polar residues-rich tracts occupy residues 246–273 and 287–300; these read ISSQ…QTTL and QPAT…SRNE. The 169-residue stretch at 331–499 folds into the Helicase ATP-binding domain; the sequence is IAHRALFHNL…EVIDGLSISR (169 aa). Residue 344 to 351 coordinates ATP; the sequence is LPTGLGKT. The DEAH box motif lies at 447 to 450; that stretch reads DEAH. Positions 675–846 constitute a Helicase C-terminal domain; that stretch reads ILNHFLDAGG…RFTFHTDKSS (172 aa). Disordered regions lie at residues 867 to 937, 1013 to 1055, and 1069 to 1110; these read ENSQ…PDLG, VGDP…RCGT, and NLAW…DVFE. A compositionally biased stretch (basic residues) spans 879–890; sequence RSRAPKRPPKKF. 3 stretches are compositionally biased toward basic and acidic residues: residues 891–900, 1041–1055, and 1077–1093; these read HMPDGVEKGF, QSRE…RCGT, and EAPR…DQKP.

It belongs to the DEAD box helicase family. DEAH subfamily. FANCM sub-subfamily. As to quaternary structure, interacts with the MHF histone-fold complex to form the FANCM-MHF complex.

Its subcellular location is the nucleus. The catalysed reaction is ATP + H2O = ADP + phosphate + H(+). Functionally, ATP-dependent DNA helicase involved in DNA damage repair by homologous recombination and in genome maintenance. Capable of unwinding D-loops. Plays a role in limiting crossover recombinants during mitotic DNA double-strand break (DSB) repair. Component of a FANCM-MHF complex which promotes gene conversion at blocked replication forks, probably by reversal of the stalled fork. This is ATP-dependent DNA helicase MPH1 from Coccidioides immitis (strain RS) (Valley fever fungus).